An 832-amino-acid chain; its full sequence is MILQAHLHSLCLLMLYLATGYGQEGKFSGPLKPMTFSIYEGQEPSQIIFQFKANPPAVTFELTGETDNIFVIEREGLLYYNRALDRETRSTHNLQVAALDANGIIVEGPVPITIKVKDINDNRPTFLQSKYEGSVRQNSRPGKPFLYVNATDLDDPATPNGQLYYQIVIQLPMINNVMYFQINNKTGAISLTREGSQELNPAKNPSYNLVISVKDMGGQSENSFSDTTSVDIIVTENIWKAPKPVEMVENSTDPHPIKITQVRWNDPGAQYSLVDKEKLPRFPFSIDQEGDIYVTQPLDREEKDAYVFYAVAKDEYGKPLSYPLEIHVKVKDINDNPPTCPSPVTVFEVQENERLGNSIGTLTAHDRDEENTANSFLNYRIVEQTPKLPMDGLFLIQTYAGMLQLAKQSLKKQDTPQYNLTIEVSDKDFKTLCFVQINVIDINDQIPIFEKSDYGNLTLAEDTNIGSTILTIQATDADEPFTGSSKILYHIIKGDSEGRLGVDTDPHTNTGYVIIKKPLDFETAAVSNIVFKAENPEPLVFGVKYNASSFAKFTLIVTDVNEAPQFSQHVFQAKVSEDVAIGTKVGNVTAKDPEGLDISYSLRGDTRGWLKIDHVTGEIFSVAPLDREAGSPYRVQVVATEVGGSSLSSVSEFHLILMDVNDNPPRLAKDYTGLFFCHPLSAPGSLIFEATDDDQHLFRGPHFTFSLGSGSLQNDWEVSKINGTHARLSTRHTEFEEREYVVLIRINDGGRPPLEGIVSLPVTFCSCVEGSCFRPAGHQTGIPTVGMAVGILLTTLLVIGIILAVVFIRIKKDKGKDNVESAQASEVKPLRS.

The signal sequence occupies residues 1 to 22 (MILQAHLHSLCLLMLYLATGYG). Topologically, residues 23-787 (QEGKFSGPLK…HQTGIPTVGM (765 aa)) are extracellular. Cadherin domains follow at residues 30-128 (PLKP…TFLQ), 129-244 (SKYE…APKP), 245-340 (VEMV…PPTC), 341-449 (PSPV…IPIF), 450-566 (EKSD…APQF), 567-667 (SQHV…PPRL), and 668-777 (AKDY…RPAG). Residues Asn149, Asn184, Asn250, Asn419, Asn456, Asn546, Asn587, and Asn722 are each glycosylated (N-linked (GlcNAc...) asparagine). The helical transmembrane segment at 788–808 (AVGILLTTLLVIGIILAVVFI) threads the bilayer. Over 809 to 832 (RIKKDKGKDNVESAQASEVKPLRS) the chain is Cytoplasmic.

As to expression, expressed in the gastrointestinal tract and pancreatic duct. Not detected in kidney, lung, liver, brain, adrenal gland and skin.

Its subcellular location is the cell membrane. Its function is as follows. Cadherins are calcium-dependent cell adhesion proteins. They preferentially interact with themselves in a homophilic manner in connecting cells; cadherins may thus contribute to the sorting of heterogeneous cell types. LI-cadherin may have a role in the morphological organization of liver and intestine. Involved in intestinal peptide transport. In Homo sapiens (Human), this protein is Cadherin-17 (CDH17).